An 84-amino-acid chain; its full sequence is Small ribosomal subunit protein uS17 (84 aa).

The protein belongs to the universal ribosomal protein uS17 family. In terms of assembly, part of the 30S ribosomal subunit.

Functionally, one of the primary rRNA binding proteins, it binds specifically to the 5'-end of 16S ribosomal RNA. The chain is Small ribosomal subunit protein uS17 from Vibrio parahaemolyticus serotype O3:K6 (strain RIMD 2210633).